Consider the following 265-residue polypeptide: Ribosomal RNA small subunit methyltransferase A (265 aa).

Residues His17, Leu19, Gly44, Glu65, Asp90, and Asn112 each contribute to the S-adenosyl-L-methionine site.

This sequence belongs to the class I-like SAM-binding methyltransferase superfamily. rRNA adenine N(6)-methyltransferase family. RsmA subfamily.

The protein resides in the cytoplasm. It carries out the reaction adenosine(1518)/adenosine(1519) in 16S rRNA + 4 S-adenosyl-L-methionine = N(6)-dimethyladenosine(1518)/N(6)-dimethyladenosine(1519) in 16S rRNA + 4 S-adenosyl-L-homocysteine + 4 H(+). Functionally, specifically dimethylates two adjacent adenosines (A1518 and A1519) in the loop of a conserved hairpin near the 3'-end of 16S rRNA in the 30S particle. May play a critical role in biogenesis of 30S subunits. The chain is Ribosomal RNA small subunit methyltransferase A from Xylella fastidiosa (strain 9a5c).